The following is a 248-amino-acid chain: Tryptophan synthase alpha chain (248 aa).

Catalysis depends on proton acceptor residues E36 and D47.

Belongs to the TrpA family. In terms of assembly, tetramer of two alpha and two beta chains.

It carries out the reaction (1S,2R)-1-C-(indol-3-yl)glycerol 3-phosphate + L-serine = D-glyceraldehyde 3-phosphate + L-tryptophan + H2O. The protein operates within amino-acid biosynthesis; L-tryptophan biosynthesis; L-tryptophan from chorismate: step 5/5. In terms of biological role, the alpha subunit is responsible for the aldol cleavage of indoleglycerol phosphate to indole and glyceraldehyde 3-phosphate. The polypeptide is Tryptophan synthase alpha chain (Pyrococcus abyssi (strain GE5 / Orsay)).